Here is a 367-residue protein sequence, read N- to C-terminus: Aurora kinase (367 aa).

Composition is skewed to polar residues over residues 1–29 (MQRN…TSRI) and 37–48 (HSPQQRNPNSKI). The segment at 1–52 (MQRNSLVNIKLNANSPSKKTTTRPNTSRINKPWRISHSPQQRNPNSKIPSPV) is disordered. Ser5 carries the post-translational modification Phosphoserine; by autocatalysis. Ser76 carries the phosphoserine modification. Positions 104–355 (FELGKKLGKG…LGDVKMHPWI (252 aa)) constitute a Protein kinase domain. ATP contacts are provided by residues 110–118 (LGKGKFGKV) and Lys133. The Proton acceptor role is filled by Asp227. Thr260 is modified (phosphothreonine; by autocatalysis).

It belongs to the protein kinase superfamily. Ser/Thr protein kinase family. Aurora subfamily. In terms of assembly, component of the CPC complex at least composed of IPL1, BIR1 and SLI15.

It is found in the nucleus. Its subcellular location is the cytoplasm. It localises to the cytoskeleton. The protein resides in the spindle. The protein localises to the chromosome. It is found in the centromere. Its subcellular location is the kinetochore. It carries out the reaction L-seryl-[protein] + ATP = O-phospho-L-seryl-[protein] + ADP + H(+). The catalysed reaction is L-threonyl-[protein] + ATP = O-phospho-L-threonyl-[protein] + ADP + H(+). Functionally, component of the chromosomal passenger complex (CPC), a complex that acts as a key regulator of chromosome segregation and cytokinesis. Has a role in error-correction of aberrent kinetochore-microtubule attachments to ensure that sister kinetochores become bioriented and connect to opposite poles by promoting spindle assembly checkpoint signaling. Acts in opposition to the phosphatase PP1. Not required for kinetochore detachment from microtubules during replication of centromeric DNA. Phosphorylates histone H3 to form H3S10ph during mitosis and meiosis. Phosphorylates CNN1, which contributes to the enrichment of CNN1 on anaphase kinetochores. Phosphorylates RGD1. The polypeptide is Aurora kinase (IPL1) (Saccharomyces cerevisiae (strain ATCC 204508 / S288c) (Baker's yeast)).